A 299-amino-acid chain; its full sequence is Protease HtpX homolog (299 aa).

Helical transmembrane passes span 15–35 (ILLLVFFLLLALVGYAVGYLF) and 39–59 (GLGGLVIALIIGFIYALSMIF). His143 serves as a coordination point for Zn(2+). The active site involves Glu144. Residue His147 participates in Zn(2+) binding. Transmembrane regions (helical) follow at residues 158–178 (IAVALASAITMLSGMAGRMMW) and 198–218 (IIMLVVSLLAIVLAPLAATLV). Glu227 is a Zn(2+) binding site.

The protein belongs to the peptidase M48B family. Requires Zn(2+) as cofactor.

The protein localises to the cell membrane. This is Protease HtpX homolog from Streptococcus pneumoniae (strain P1031).